A 151-amino-acid chain; its full sequence is Small ribosomal subunit protein uS11 (151 aa).

The residue at position 16 (Ser-16) is a Phosphoserine. Glycyl lysine isopeptide (Lys-Gly) (interchain with G-Cter in SUMO2) cross-links involve residues Lys-61, Lys-63, and Lys-106. Residues 131–151 are disordered; the sequence is DVTPIPSDSTRRKGGRRGRRL. Thr-133 is modified (phosphothreonine). Residue Ser-139 is modified to Phosphoserine. Basic residues predominate over residues 142 to 151; it reads RKGGRRGRRL.

The protein belongs to the universal ribosomal protein uS11 family. As to quaternary structure, component of the small ribosomal subunit. Part of the small subunit (SSU) processome, composed of more than 70 proteins and the RNA chaperone small nucleolar RNA (snoRNA) U3.

The protein localises to the cytoplasm. Its subcellular location is the nucleus. It localises to the nucleolus. Component of the small ribosomal subunit. The ribosome is a large ribonucleoprotein complex responsible for the synthesis of proteins in the cell. Part of the small subunit (SSU) processome, first precursor of the small eukaryotic ribosomal subunit. During the assembly of the SSU processome in the nucleolus, many ribosome biogenesis factors, an RNA chaperone and ribosomal proteins associate with the nascent pre-rRNA and work in concert to generate RNA folding, modifications, rearrangements and cleavage as well as targeted degradation of pre-ribosomal RNA by the RNA exosome. The chain is Small ribosomal subunit protein uS11 (Rps14) from Mus musculus (Mouse).